Reading from the N-terminus, the 505-residue chain is Amidophosphoribosyltransferase (505 aa).

The active-site Nucleophile is the cysteine 2. The Glutamine amidotransferase type-2 domain maps to 2 to 235; sequence CGIVGIVSQS…AGEAVYVTFD (234 aa). Threonine 306, aspartate 368, and aspartate 369 together coordinate Mg(2+). Residues 484-505 form a disordered region; that stretch reads RNDNAKKKREKQASNLEIYNEQ. The segment covering 496-505 has biased composition (polar residues); sequence ASNLEIYNEQ.

It in the C-terminal section; belongs to the purine/pyrimidine phosphoribosyltransferase family. The cofactor is Mg(2+).

It catalyses the reaction 5-phospho-beta-D-ribosylamine + L-glutamate + diphosphate = 5-phospho-alpha-D-ribose 1-diphosphate + L-glutamine + H2O. It functions in the pathway purine metabolism; IMP biosynthesis via de novo pathway; N(1)-(5-phospho-D-ribosyl)glycinamide from 5-phospho-alpha-D-ribose 1-diphosphate: step 1/2. In terms of biological role, catalyzes the formation of phosphoribosylamine from phosphoribosylpyrophosphate (PRPP) and glutamine. This is Amidophosphoribosyltransferase from Haemophilus influenzae (strain ATCC 51907 / DSM 11121 / KW20 / Rd).